The following is a 293-amino-acid chain: tRNA-cytidine(32) 2-sulfurtransferase (293 aa).

The short motif at 71–76 (SGGKDS) is the PP-loop motif element. C146, C149, and C237 together coordinate [4Fe-4S] cluster.

It belongs to the TtcA family. As to quaternary structure, homodimer. Requires Mg(2+) as cofactor. The cofactor is [4Fe-4S] cluster.

It is found in the cytoplasm. The enzyme catalyses cytidine(32) in tRNA + S-sulfanyl-L-cysteinyl-[cysteine desulfurase] + AH2 + ATP = 2-thiocytidine(32) in tRNA + L-cysteinyl-[cysteine desulfurase] + A + AMP + diphosphate + H(+). It participates in tRNA modification. Its function is as follows. Catalyzes the ATP-dependent 2-thiolation of cytidine in position 32 of tRNA, to form 2-thiocytidine (s(2)C32). The sulfur atoms are provided by the cysteine/cysteine desulfurase (IscS) system. The protein is tRNA-cytidine(32) 2-sulfurtransferase of Sinorhizobium medicae (strain WSM419) (Ensifer medicae).